Reading from the N-terminus, the 143-residue chain is Cytotoxic L-amino-acid oxidase (143 aa).

It belongs to the flavin monoamine oxidase family. FAD is required as a cofactor.

The catalysed reaction is an L-alpha-amino acid + O2 + H2O = a 2-oxocarboxylate + H2O2 + NH4(+). Its function is as follows. Cytotoxic L-amino acid oxidase with high oxidase activity towards DL-methionine and L-methionine, L-phenylalanine, DL-norleucine, L-isoleucine, L-arginine, L-tyrosine, and DL-leucine. Shows relatively low activity towards DL-lysine and L-lysine, DL-asparagine, DL-valine, L-histidine, DL-threonine, DL-tryptophan, and L-glutamic acid; and no activity towards L-cysteine, L-glycine, L-proline, L-oxyproline, DL-serine, and DL-aspartic acid. Does not use benzylamine, ethanolamine, diethylamine, meta- and para-phenylendiamine, ortho-, meta- and para-aminophenols, or putrescin as a substrate. Acts as a toxin by inducing chromatin condensation, as well as DNA and nucleus fragmentation, which are typical for apoptosis. Probably induces cell damage indirectly via the generation of free radicals and oxidant agents that can trigger cell impairment and apoptosis by a caspase-independent pathway. This is Cytotoxic L-amino-acid oxidase from Amanita phalloides (Death cap).